Here is a 77-residue protein sequence, read N- to C-terminus: MKVFSFTIGLVVIISLFAFALAYDEETDLMKKLVEMERAIEQRIICAPEGGPCVVGIGCCKGYSCAPGLLGLVGHCQ.

The N-terminal stretch at 1–22 (MKVFSFTIGLVVIISLFAFALA) is a signal peptide. The propeptide occupies 23–43 (YDEETDLMKKLVEMERAIEQR). 3 cysteine pairs are disulfide-bonded: C46–C60, C53–C65, and C59–C76.

As to expression, expressed by the venom gland.

It is found in the secreted. In terms of biological role, intrathorax injection into crickets causes paralysis prolonged for more than 60 minutes, followed by recovery. The sequence is that of U8-hexatoxin-Mg1a from Macrothele gigas (Japanese funnel web spider).